We begin with the raw amino-acid sequence, 576 residues long: 4-alpha-glucanotransferase DPE1, chloroplastic/amyloplastic (576 aa).

Residues Met1–Arg45 constitute a chloroplast transit peptide.

Belongs to the disproportionating enzyme family.

Its subcellular location is the plastid. It is found in the chloroplast. The protein resides in the amyloplast. It carries out the reaction Transfers a segment of a (1-&gt;4)-alpha-D-glucan to a new position in an acceptor, which may be glucose or a (1-&gt;4)-alpha-D-glucan.. Its function is as follows. Chloroplastic alpha-glucanotransferase involved in maltotriose metabolism. Probably uses maltotriose as substrate to transfer a maltosyl unit from one molecule to another, resulting in glucose and maltopentaose. The latter can then be further metabolized to maltose and maltotriose by beta-amylase. Required for normal starch degradation in leaves. This Arabidopsis thaliana (Mouse-ear cress) protein is 4-alpha-glucanotransferase DPE1, chloroplastic/amyloplastic (DPE1).